Consider the following 248-residue polypeptide: Triosephosphate isomerase (248 aa).

Residue 9 to 11 participates in substrate binding; sequence NWK. Histidine 94 functions as the Electrophile in the catalytic mechanism. Residue glutamate 166 is the Proton acceptor of the active site. Substrate is bound by residues glycine 172, serine 212, and 233 to 234; that span reads GG.

The protein belongs to the triosephosphate isomerase family. As to quaternary structure, homodimer.

It localises to the cytoplasm. It carries out the reaction D-glyceraldehyde 3-phosphate = dihydroxyacetone phosphate. The protein operates within carbohydrate biosynthesis; gluconeogenesis. It participates in carbohydrate degradation; glycolysis; D-glyceraldehyde 3-phosphate from glycerone phosphate: step 1/1. Functionally, involved in the gluconeogenesis. Catalyzes stereospecifically the conversion of dihydroxyacetone phosphate (DHAP) to D-glyceraldehyde-3-phosphate (G3P). The sequence is that of Triosephosphate isomerase from Clostridium botulinum (strain Eklund 17B / Type B).